The sequence spans 173 residues: Adenine phosphoribosyltransferase (173 aa).

This sequence belongs to the purine/pyrimidine phosphoribosyltransferase family. As to quaternary structure, homodimer.

It localises to the cytoplasm. It catalyses the reaction AMP + diphosphate = 5-phospho-alpha-D-ribose 1-diphosphate + adenine. It participates in purine metabolism; AMP biosynthesis via salvage pathway; AMP from adenine: step 1/1. Catalyzes a salvage reaction resulting in the formation of AMP, that is energically less costly than de novo synthesis. The protein is Adenine phosphoribosyltransferase of Listeria monocytogenes serotype 4b (strain CLIP80459).